A 154-amino-acid chain; its full sequence is MGLSDGEWQQVLNVWGKVEADIAGHGQEVLIRLFTGHPETLEKFDKFKHLKTEAEMKASEDLKKHGTVVLTALGGILKKKGHHEAELKPLAQSHATKHKIPIKYLEFISDAIIHVLHSKHPGDFGADAQGAMTKALELFRNDIAAKYKELGFQG.

Residues 2 to 148 enclose the Globin domain; the sequence is GLSDGEWQQV…FRNDIAAKYK (147 aa). Ser-4 is subject to Phosphoserine. His-65 is a nitrite binding site. His-65 contributes to the O2 binding site. Residue His-94 participates in heme b binding.

This sequence belongs to the globin family. In terms of assembly, monomeric.

It localises to the cytoplasm. Its subcellular location is the sarcoplasm. It carries out the reaction Fe(III)-heme b-[protein] + nitric oxide + H2O = Fe(II)-heme b-[protein] + nitrite + 2 H(+). The enzyme catalyses H2O2 + AH2 = A + 2 H2O. Functionally, monomeric heme protein which primary function is to store oxygen and facilitate its diffusion within muscle tissues. Reversibly binds oxygen through a pentacoordinated heme iron and enables its timely and efficient release as needed during periods of heightened demand. Depending on the oxidative conditions of tissues and cells, and in addition to its ability to bind oxygen, it also has a nitrite reductase activity whereby it regulates the production of bioactive nitric oxide. Under stress conditions, like hypoxia and anoxia, it also protects cells against reactive oxygen species thanks to its pseudoperoxidase activity. The polypeptide is Myoglobin (MB) (Equus quagga burchellii (Burchell's zebra)).